The primary structure comprises 136 residues: Large ribosomal subunit protein uL16 (136 aa).

It belongs to the universal ribosomal protein uL16 family. Part of the 50S ribosomal subunit.

Functionally, binds 23S rRNA and is also seen to make contacts with the A and possibly P site tRNAs. In Shewanella denitrificans (strain OS217 / ATCC BAA-1090 / DSM 15013), this protein is Large ribosomal subunit protein uL16.